Consider the following 100-residue polypeptide: NADH-quinone oxidoreductase subunit K (100 aa).

3 helical membrane passes run 2 to 22 (ISLNHYLLLCVILFCIGLFGI), 28 to 48 (ILMLFFSTEILLNAINIGFVA), and 63 to 83 (LFIIAIAASEIAVGLGLVVIW).

The protein belongs to the complex I subunit 4L family. As to quaternary structure, NDH-1 is composed of 14 different subunits. Subunits NuoA, H, J, K, L, M, N constitute the membrane sector of the complex.

The protein resides in the cell inner membrane. It carries out the reaction a quinone + NADH + 5 H(+)(in) = a quinol + NAD(+) + 4 H(+)(out). In terms of biological role, NDH-1 shuttles electrons from NADH, via FMN and iron-sulfur (Fe-S) centers, to quinones in the respiratory chain. The immediate electron acceptor for the enzyme in this species is believed to be ubiquinone. Couples the redox reaction to proton translocation (for every two electrons transferred, four hydrogen ions are translocated across the cytoplasmic membrane), and thus conserves the redox energy in a proton gradient. The sequence is that of NADH-quinone oxidoreductase subunit K from Helicobacter hepaticus (strain ATCC 51449 / 3B1).